Reading from the N-terminus, the 385-residue chain is cAMP-dependent protein kinase, catalytic subunit-like (385 aa).

Positions 63 to 317 (LERIVTIGKG…TQDVKDHKWF (255 aa)) constitute a Protein kinase domain. ATP-binding positions include 69–77 (IGKGTFGRV) and Lys-92. The Proton acceptor role is filled by Asp-186. Positions 318–385 (EKVNWDDTLH…QRERDLFAEW (68 aa)) constitute an AGC-kinase C-terminal domain.

This sequence belongs to the protein kinase superfamily. Ser/Thr protein kinase family. cAMP subfamily.

The enzyme catalyses L-seryl-[protein] + ATP = O-phospho-L-seryl-[protein] + ADP + H(+). It carries out the reaction L-threonyl-[protein] + ATP = O-phospho-L-threonyl-[protein] + ADP + H(+). The chain is cAMP-dependent protein kinase, catalytic subunit-like from Caenorhabditis briggsae.